A 345-amino-acid chain; its full sequence is NADPH dehydrogenase (345 aa).

23 to 26 (SPMC) is an FMN binding site. Y28 serves as a coordination point for substrate. 2 residues coordinate FMN: A60 and Q102. 164–167 (HGAH) contributes to the substrate binding site. FMN contacts are provided by residues R215 and 307 to 308 (GR).

Belongs to the NADH:flavin oxidoreductase/NADH oxidase family. NamA subfamily. As to quaternary structure, homotetramer. FMN serves as cofactor.

The enzyme catalyses A + NADPH + H(+) = AH2 + NADP(+). In terms of biological role, catalyzes the reduction of the double bond of an array of alpha,beta-unsaturated aldehydes and ketones. It also reduces the nitro group of nitroester and nitroaromatic compounds. It could have a role in detoxification processes. This is NADPH dehydrogenase from Bacillus cereus (strain B4264).